We begin with the raw amino-acid sequence, 510 residues long: MALTLSFSLPLPSLHQKIPSKYSTFRPIIVSLSDKSTIEITQPIKLSTRTIPGDYGLPGIGPWKDRLDYFYNQGKNDFFESRIAKYKSTIFRTNMPPGPFITSNPKVIVLLDGKSFPVLFDASKVEKKDLFTGTFVPSTELTGGYRILSYLDPSEPNHEKLKKLMFFLLSSRRDHVIPEFHETYTELFETLDKEMEEKGTVGFNSGSDQAAFNFLARSLFGVNPVETKLGTDGPALIGKWILLQLHPVITLGLPKFLDDVLLHTFRLPPILVKKDYQRLYDFFYTNSANLFIEAEKLGISKDEACHNLLFATCFNSFGGMKIFFPNMLKSIAKAGVEIHTRLANEIRSEVKSAGGKITMSAMEKMPLMKSVVYEALRVDPPVASQYGRAKQDLKIESHDAVFEVKKGEILFGYQPFATKDPKIFDRPGEFVADRFVGEEGEKLLKHVLWSNGPETESPTVGNKQCAGKDFVVMVSRLFVTEFFLRYGTLNVDVGTSALGSSITITSLKKA.

The transit peptide at 1–31 (MALTLSFSLPLPSLHQKIPSKYSTFRPIIVS) directs the protein to the chloroplast. Positions 127, 158, and 162 each coordinate heme b. (13S)-hydroperoxy-(9Z,11E)-octadecadienoate-binding residues include Asn315 and Lys321. Asn315 is a binding site for (13S)-hydroperoxy-(9Z,11E,15Z)-octadecatrienoate. Heme b contacts are provided by Lys463 and Cys465.

The protein belongs to the cytochrome P450 family. Heme b is required as a cofactor. Expressed in flower buds, leaves, roots, stems, petioles and cotyledons. Not detected in ripe fruits. Expressed in sieve elements.

It localises to the plastid. Its subcellular location is the chloroplast inner membrane. It carries out the reaction (13S)-hydroperoxy-(9Z,11E,15Z)-octadecatrienoate = (9Z,13S,15Z)-12,13-epoxyoctadeca-9,11,15-trienoate + H2O. The catalysed reaction is (13S)-hydroperoxy-(9Z,11E)-octadecadienoate = (9Z,13S)-12,13-epoxyoctadeca-9,11-dienoate + H2O. In terms of biological role, cytochrome P450 of the CYP74A subfamily involved in the biosynthesis of jasmonic acid from lipoxygenase-derived hydroperoxides of free fatty acids. Catalyzes the synthesis of unstable allene oxide, which is further converted spontaneously by hydrolysis or cyclization. Metabolizes 13- but not 9-hydroperoxides of linoleic and linolenic acids. Can use 15S-hydroperoxy-11(Z),13(E),17(Z)-eicosatrienoic acid (15-HPET) and 13S-hydroperoxy-9(Z),11(E),15(Z)-octadecatrienoic acid (13-HPOT) as substrates, but only 50% activity with 13S-hydroperoxy-9(Z),11(E)-octadecadienoic acid (13-HPOD). The protein is Allene oxide synthase 2, chloroplastic of Solanum lycopersicum (Tomato).